A 227-amino-acid chain; its full sequence is Cytochrome c oxidase subunit 2 (227 aa).

Over 1 to 14 the chain is Mitochondrial intermembrane; sequence MAYPFQLGLQDATS. A helical transmembrane segment spans residues 15–45; sequence PIMEELTNFHDHTLMIVFLISSLVLYIISLM. Topologically, residues 46-59 are mitochondrial matrix; sequence LTTKLTHTSTMDAQ. Residues 60–87 form a helical membrane-spanning segment; the sequence is EVETIWTILPAVILILIALPSLRILYMM. Over 88–227 the chain is Mitochondrial intermembrane; that stretch reads DEINNPALTV…HFENWSASMI (140 aa). 6 residues coordinate Cu cation: H161, C196, E198, C200, H204, and M207. E198 contributes to the Mg(2+) binding site.

Belongs to the cytochrome c oxidase subunit 2 family. As to quaternary structure, component of the cytochrome c oxidase (complex IV, CIV), a multisubunit enzyme composed of 14 subunits. The complex is composed of a catalytic core of 3 subunits MT-CO1, MT-CO2 and MT-CO3, encoded in the mitochondrial DNA, and 11 supernumerary subunits COX4I, COX5A, COX5B, COX6A, COX6B, COX6C, COX7A, COX7B, COX7C, COX8 and NDUFA4, which are encoded in the nuclear genome. The complex exists as a monomer or a dimer and forms supercomplexes (SCs) in the inner mitochondrial membrane with NADH-ubiquinone oxidoreductase (complex I, CI) and ubiquinol-cytochrome c oxidoreductase (cytochrome b-c1 complex, complex III, CIII), resulting in different assemblies (supercomplex SCI(1)III(2)IV(1) and megacomplex MCI(2)III(2)IV(2)). Found in a complex with TMEM177, COA6, COX18, COX20, SCO1 and SCO2. Interacts with TMEM177 in a COX20-dependent manner. Interacts with COX20. Interacts with COX16. The cofactor is Cu cation.

The protein resides in the mitochondrion inner membrane. It carries out the reaction 4 Fe(II)-[cytochrome c] + O2 + 8 H(+)(in) = 4 Fe(III)-[cytochrome c] + 2 H2O + 4 H(+)(out). Its function is as follows. Component of the cytochrome c oxidase, the last enzyme in the mitochondrial electron transport chain which drives oxidative phosphorylation. The respiratory chain contains 3 multisubunit complexes succinate dehydrogenase (complex II, CII), ubiquinol-cytochrome c oxidoreductase (cytochrome b-c1 complex, complex III, CIII) and cytochrome c oxidase (complex IV, CIV), that cooperate to transfer electrons derived from NADH and succinate to molecular oxygen, creating an electrochemical gradient over the inner membrane that drives transmembrane transport and the ATP synthase. Cytochrome c oxidase is the component of the respiratory chain that catalyzes the reduction of oxygen to water. Electrons originating from reduced cytochrome c in the intermembrane space (IMS) are transferred via the dinuclear copper A center (CU(A)) of subunit 2 and heme A of subunit 1 to the active site in subunit 1, a binuclear center (BNC) formed by heme A3 and copper B (CU(B)). The BNC reduces molecular oxygen to 2 water molecules using 4 electrons from cytochrome c in the IMS and 4 protons from the mitochondrial matrix. The polypeptide is Cytochrome c oxidase subunit 2 (MT-CO2) (Berylmys bowersi (Bower's white-toothed rat)).